The following is a 196-amino-acid chain: Probable GTP-binding protein EngB (196 aa).

The EngB-type G domain occupies 22-195 (KLPEVALAGR…WNWIESITKV (174 aa)). Residues 30-37 (GRSNVGKS), 57-61 (GKTQT), 75-78 (DVPG), 142-145 (TKID), and 174-176 (FSA) contribute to the GTP site. Residues Ser37 and Thr59 each coordinate Mg(2+).

Belongs to the TRAFAC class TrmE-Era-EngA-EngB-Septin-like GTPase superfamily. EngB GTPase family. It depends on Mg(2+) as a cofactor.

Functionally, necessary for normal cell division and for the maintenance of normal septation. In Ligilactobacillus salivarius (strain UCC118) (Lactobacillus salivarius), this protein is Probable GTP-binding protein EngB.